A 208-amino-acid polypeptide reads, in one-letter code: Ribosomal RNA small subunit methyltransferase G (208 aa).

S-adenosyl-L-methionine-binding positions include G74, L79, 125 to 126 (VE), and R140.

Belongs to the methyltransferase superfamily. RNA methyltransferase RsmG family.

The protein resides in the cytoplasm. It carries out the reaction guanosine(527) in 16S rRNA + S-adenosyl-L-methionine = N(7)-methylguanosine(527) in 16S rRNA + S-adenosyl-L-homocysteine. Specifically methylates the N7 position of guanine in position 527 of 16S rRNA. The chain is Ribosomal RNA small subunit methyltransferase G from Shewanella denitrificans (strain OS217 / ATCC BAA-1090 / DSM 15013).